Consider the following 1243-residue polypeptide: MMRRPPSQGRWSASHQKLLLAFAFILIPWLQLADAQQQPQQPQIRIHSQRGDAPLDKVADDANTRWYATHAAPDVHPEAKFDTVNRKQKQQSTASPQQHQKYRRAPYDYASKDKAQNRYAQHPIRESEKPNYVKVPNDASALATLAPAQPVRAPHTSRHHWPSSSAASGLASPQNARSLEDWEVEDFVLLATVDGDLYASDRKTGRHLWHLEVDQPVVETKHYRTNNSVLDDDYRPVDHYIWAVEPSRDGGLYVWIPDSGAGLVRTGFTMKHLVEELAPYAGDEPPVVYTGDKKTTMVTLDAATGRVLKWFGSSGSQVNEAESCLRPNAFDDRDTTECSSMGTITLGRTEYTVGIQRRDGRPIATLKYAEWGPNTFDSDLYQQYHASLDNHYITSQHDGRIYAFDKSQAENDLPLYTHKFSSPVARVFDVCRPWDANAGSNPELVVLPQPPIPALDESTVKMRSNSIFLNQTESGDWYALSGRAYPLILDAPVAQISRDDLWDMAHAFDSINPNKLSKALVGTHFLNPVKSTGYHQPPTLPAGALDEYYEDLENASNNAHAVTNTVPEEPTIITKVKALPQSAANSVIDFVSNPILIIFLIGSLIYNEKKLRRSYHRFRTHGTIKDVYPFFVIESEAGDESGDDKDGVFPSSPSPRSQPQDQNAEDHLSRHKVERNAGDQDKVKDNRSLHDVSDTLEPSNKTVEKTADVVKQVDVAGPDAPSTDSNGAAPEKKKKAHRGRRGGVKHRKGRPTDGSQSHENDPALTTVDEAVSNAKKLGDRPSLEPDVMTIYNDMQAVTGSVISMGNIEVDTDVELGMGSNGTVVFAGRFDGRDVAVKRMTIQFYDIATRETKLLRESDDHPNVIRYYSQVQRGDFLYIALERCAASLADVIEKPYAFGELAKAGQKDLPGVLYQITNGISHLHSLRIVHRDLKPQNILVNLDKDGRPRLLVSDFGLCKKLEDRQSSFGATTGRAAGTSGWRAPELLLDDDGQNPAAIDSSTHSGSHTILVGDPNSLSNGGRATRAIDIFSLGLVFFYVLTNGSHPFDCGDRYMREVNIRKGNYNLDPLDALGDFAYEAKDLIASMLQASPKARPDSREVMAHPFFWSPKKRLAFLCDVSDSLEKEVRDPPSPALVELERHAPEVIKGDFLKVLTRDFVESLGKQRKYTGNKLLDLLRALRNKRNHYEDMSDSLKRSVGSLPDGYLAYWTVKFPMLLLTCWNVVYNLEWEKTDRFREYYEPAGL.

The signal sequence occupies residues 1–35 (MMRRPPSQGRWSASHQKLLLAFAFILIPWLQLADA). Over 36 to 585 (QQQPQQPQIR…VKALPQSAAN (550 aa)) the chain is Lumenal. Disordered stretches follow at residues 70 to 132 (HAAP…KPNY) and 149 to 172 (QPVR…GLAS). The segment covering 73–85 (PDVHPEAKFDTVN) has biased composition (basic and acidic residues). Residues 90-99 (QQSTASPQQH) show a composition bias toward polar residues. Positions 163-172 (SSSAASGLAS) are enriched in low complexity. 3 N-linked (GlcNAc...) asparagine glycosylation sites follow: N226, N470, and N554. The chain crosses the membrane as a helical span at residues 586-606 (SVIDFVSNPILIIFLIGSLIY). Topologically, residues 607 to 1243 (NEKKLRRSYH…FREYYEPAGL (637 aa)) are cytoplasmic. A disordered region spans residues 638–765 (GDESGDDKDG…QSHENDPALT (128 aa)). Residues 650 to 660 (PSSPSPRSQPQ) are compositionally biased toward low complexity. Over residues 674–693 (ERNAGDQDKVKDNRSLHDVS) the composition is skewed to basic and acidic residues. Positions 732–749 (KKKKAHRGRRGGVKHRKG) are enriched in basic residues. The Protein kinase domain maps to 809–1105 (VDTDVELGMG…SREVMAHPFF (297 aa)). ATP is bound by residues 815 to 823 (LGMGSNGTV) and K837. Positions 819, 837, 881, and 883 each coordinate ADP. D931 acts as the Proton acceptor in catalysis. N936 and D953 together coordinate Mg(2+). The region spanning 1108–1240 (PKKRLAFLCD…TDRFREYYEP (133 aa)) is the KEN domain.

It belongs to the protein kinase superfamily. Ser/Thr protein kinase family. Requires Mg(2+) as cofactor. Autophosphorylated mainly on serine residues; phosphorylation enables nucleotide binding by the active site.

The protein localises to the endoplasmic reticulum membrane. The catalysed reaction is L-seryl-[protein] + ATP = O-phospho-L-seryl-[protein] + ADP + H(+). It catalyses the reaction L-threonyl-[protein] + ATP = O-phospho-L-threonyl-[protein] + ADP + H(+). In terms of biological role, senses unfolded proteins in the lumen of the endoplasmic reticulum via its N-terminal domain which leads to enzyme auto-activation. The active endoribonuclease domain splices precursor mRNAs to produce their mature form which then induces transcription of UPR target genes. In Hypocrea jecorina (strain QM6a) (Trichoderma reesei), this protein is Serine/threonine-protein kinase/endoribonuclease IRE1.